A 1006-amino-acid polypeptide reads, in one-letter code: DNA polymerase (1006 aa).

The protein belongs to the DNA polymerase type-B family. As to quaternary structure, interacts with OPG148. Component of the Uracil-DNA glycosylase(UDG)-OPG148-polymerase complex; OPG148 and OPG116/UDG form a heterodimeric processivity factor that associates with OPG071 to form the processive polymerase holoenzyme.

It carries out the reaction DNA(n) + a 2'-deoxyribonucleoside 5'-triphosphate = DNA(n+1) + diphosphate. In terms of biological role, catalyzes DNA synthesis. Acquires processivity by associating with a heterodimeric processivity factor comprised of the viral OPG148 and OPG116 proteins, thereby forming the DNA polymerase holoenzyme. Displays 3'- to 5' exonuclease activity. Might participate in viral DNA recombination. Does not perform OPG116/D4synthesis across an abasic site. The sequence is that of DNA polymerase (OPG071) from Homo sapiens (Human).